Here is a 251-residue protein sequence, read N- to C-terminus: Flap endonuclease Xni (251 aa).

D104 contacts Mg(2+). One can recognise a 5'-3' exonuclease domain in the interval 160 to 249 (VQPQQLPDYW…IDGNLQQLRL (90 aa)). K(+)-binding residues include L171, A172, P180, V182, and I185. The interval 184-189 (GIGPKS) is interaction with DNA.

It belongs to the Xni family. Requires Mg(2+) as cofactor. K(+) is required as a cofactor.

Functionally, has flap endonuclease activity. During DNA replication, flap endonucleases cleave the 5'-overhanging flap structure that is generated by displacement synthesis when DNA polymerase encounters the 5'-end of a downstream Okazaki fragment. In Escherichia coli O17:K52:H18 (strain UMN026 / ExPEC), this protein is Flap endonuclease Xni.